The chain runs to 61 residues: Protein CopA/IncA (61 aa).

Functionally, controls the copy number in gene replication. This Escherichia coli protein is Protein CopA/IncA (copA).